The primary structure comprises 204 residues: 3-isopropylmalate dehydratase small subunit (204 aa).

Belongs to the LeuD family. LeuD type 1 subfamily. In terms of assembly, heterodimer of LeuC and LeuD.

The enzyme catalyses (2R,3S)-3-isopropylmalate = (2S)-2-isopropylmalate. It functions in the pathway amino-acid biosynthesis; L-leucine biosynthesis; L-leucine from 3-methyl-2-oxobutanoate: step 2/4. Its function is as follows. Catalyzes the isomerization between 2-isopropylmalate and 3-isopropylmalate, via the formation of 2-isopropylmaleate. This is 3-isopropylmalate dehydratase small subunit from Roseiflexus sp. (strain RS-1).